The following is a 204-amino-acid chain: Peptidyl-tRNA hydrolase (204 aa).

Tyrosine 14 contacts tRNA. The active-site Proton acceptor is histidine 19. TRNA-binding residues include phenylalanine 64, asparagine 66, and asparagine 112.

Belongs to the PTH family. As to quaternary structure, monomer.

It localises to the cytoplasm. The catalysed reaction is an N-acyl-L-alpha-aminoacyl-tRNA + H2O = an N-acyl-L-amino acid + a tRNA + H(+). In terms of biological role, hydrolyzes ribosome-free peptidyl-tRNAs (with 1 or more amino acids incorporated), which drop off the ribosome during protein synthesis, or as a result of ribosome stalling. Its function is as follows. Catalyzes the release of premature peptidyl moieties from peptidyl-tRNA molecules trapped in stalled 50S ribosomal subunits, and thus maintains levels of free tRNAs and 50S ribosomes. The protein is Peptidyl-tRNA hydrolase of Azorhizobium caulinodans (strain ATCC 43989 / DSM 5975 / JCM 20966 / LMG 6465 / NBRC 14845 / NCIMB 13405 / ORS 571).